Here is a 73-residue protein sequence, read N- to C-terminus: Translation initiation factor IF-1 (73 aa).

The S1-like domain maps to 1 to 73; that stretch reads MAKKEDTIVL…TKARVVYRHR (73 aa).

It belongs to the IF-1 family. In terms of assembly, component of the 30S ribosomal translation pre-initiation complex which assembles on the 30S ribosome in the order IF-2 and IF-3, IF-1 and N-formylmethionyl-tRNA(fMet); mRNA recruitment can occur at any time during PIC assembly.

The protein resides in the cytoplasm. One of the essential components for the initiation of protein synthesis. Stabilizes the binding of IF-2 and IF-3 on the 30S subunit to which N-formylmethionyl-tRNA(fMet) subsequently binds. Helps modulate mRNA selection, yielding the 30S pre-initiation complex (PIC). Upon addition of the 50S ribosomal subunit IF-1, IF-2 and IF-3 are released leaving the mature 70S translation initiation complex. This chain is Translation initiation factor IF-1, found in Chlamydia muridarum (strain MoPn / Nigg).